We begin with the raw amino-acid sequence, 259 residues long: DNA-directed RNA polymerase subunit Rpo3 (259 aa).

This sequence belongs to the archaeal Rpo3/eukaryotic RPB3 RNA polymerase subunit family. In terms of assembly, part of the RNA polymerase complex.

The protein localises to the cytoplasm. It catalyses the reaction RNA(n) + a ribonucleoside 5'-triphosphate = RNA(n+1) + diphosphate. DNA-dependent RNA polymerase (RNAP) catalyzes the transcription of DNA into RNA using the four ribonucleoside triphosphates as substrates. This chain is DNA-directed RNA polymerase subunit Rpo3, found in Thermococcus kodakarensis (strain ATCC BAA-918 / JCM 12380 / KOD1) (Pyrococcus kodakaraensis (strain KOD1)).